Consider the following 620-residue polypeptide: MEAPICLVENWKNQLTVNLEAIRILEQIAQPLVVVAIVGLYRTGKSYLMNRLAGRNHGFSLGSTVQSETKGIWMWCVPHPTKPTHTLVLLDTEGLGDVEKGDPKNDSWIFALAVLLSSTFVYNSMSTINQQALEQLHFVTELTQLIRAKSSPREDKVKDSSEFVGFFPDFIWAVRDFALELKLNGRPITEDEYLENALKLIQGDNLKVQQSNMTRECIRYFFPVRKCFVFDRPTSDKRLLLQIENVPENQLERNFQVESEKFCSYIFTNGKTKTLRGGVIVTGNRLGTLVQTYVNAINSGTVPCLENAVTTLAQRENSIAVQKAADHYSEQMAQRMRLPTDTLQELLTVHAACEKEAIAVFMEHSFKDDEQEFQKKLVVTIEERKEEFIRQNEAASIRHCQAELERLSESLRKSISCGAFSVPGGHSLYLEARKKIELGYQQVLRKGVKAKEVLKSFLQSQAIMEDSILQSDKALTDGERAIAAERTKKEVAEKELELLRQRQKEQEQVMEAQERSFRENIAKLQEKMESEKEMLLREQEKMLEHKLKVQEELLIEGFREKSDMLKNEISHLREEMERTRRKPSLFGQILDTIGNAFIMILPGAGKLFGVGLKFLGSLSS.

The GTPase domain (Globular) stretch occupies residues 1–304; that stretch reads MEAPICLVEN…NAINSGTVPC (304 aa). The GB1/RHD3-type G domain maps to 29–271; that stretch reads AQPLVVVAIV…FCSYIFTNGK (243 aa). GTP-binding positions include 39–46, 61–63, and 91–95; these read GLYRTGKS, LGS, and DTEGL. Coiled-coil stretches lie at residues 375 to 411 and 477 to 582; these read KKLVVTIEERKEEFIRQNEAASIRHCQAELERLSESL and DGER…TRRK.

The protein belongs to the TRAFAC class dynamin-like GTPase superfamily. GB1/RHD3 GTPase family. GB1 subfamily. As to quaternary structure, heterodimer with other family members, including GBP1, GBP2 and GBP5. Dimerization regulates subcellular location. In terms of tissue distribution, brain, lung, heart, spleen, kidney, liver and intestine.

The protein resides in the cytoplasm. It is found in the perinuclear region. Its subcellular location is the golgi apparatus membrane. The enzyme catalyses GTP + H2O = GDP + phosphate + H(+). Interferon (IFN)-inducible GTPase that plays important roles in innate immunity against a diverse range of bacterial, viral and protozoan pathogens. Hydrolyzes GTP very efficiently; GDP rather than GMP is the major reaction product. Following infection, recruited to the pathogen-containing vacuoles or vacuole-escaped bacteria and acts as a positive regulator of inflammasome assembly by promoting the release of inflammasome ligands from bacteria. Acts by promoting lysis of pathogen-containing vacuoles, releasing pathogens into the cytosol. Following pathogen release in the cytosol, promotes recruitment of proteins that mediate bacterial cytolysis, such as Gm12250/Irgb10: this liberates ligands that are detected by inflammasomes, such as lipopolysaccharide (LPS) that activates the non-canonical CASP4/CASP11 inflammasome or double-stranded DNA (dsDNA) that activates the AIM2 inflammasome. May play a role in erythroid differentiation. The polypeptide is Guanylate-binding protein 3 (Mus musculus (Mouse)).